A 287-amino-acid chain; its full sequence is Leukocyte-associated immunoglobulin-like receptor 1 (287 aa).

The signal sequence occupies residues 1–21 (MSPHPTALLGLVLCLAQTIHT). The Extracellular portion of the chain corresponds to 22–165 (QEEDLPRPSI…SQGLKAEHLY (144 aa)). In terms of domain architecture, Ig-like C2-type spans 29 to 117 (PSISAEPGTV…KWSEQSDYLE (89 aa)). Residues cysteine 49 and cysteine 101 are joined by a disulfide bond. Asparagine 69 is a glycosylation site (N-linked (GlcNAc...) asparagine). A disordered region spans residues 121–155 (KESSGGPDSPDTEPGSSAGPTQRPSDNSHNEHAPA). Residues 134–145 (PGSSAGPTQRPS) are compositionally biased toward polar residues. The helical transmembrane segment at 166–186 (ILIGVSVVFLFCLLLLVLFCL) threads the bilayer. Over 187-287 (HRQNQIKQGP…SITYAAVARH (101 aa)) the chain is Cytoplasmic. The tract at residues 192–211 (IKQGPPRSKDEEQKPQQRPD) is disordered. Basic and acidic residues predominate over residues 198-208 (RSKDEEQKPQQ). 2 short sequence motifs (ITIM motif) span residues 249–254 (VTYAQL) and 279–284 (ITYAAV). Tyrosine 251 and tyrosine 281 each carry phosphotyrosine.

As to quaternary structure, interacts with SH2 domains of tyrosine-protein phosphatases PTPN6 and PTPN11. The interaction with PTPN6 is constitutive. Interacts with the SH2 domain of CSK. Binds with high affinity to extracellular matrix collagens, the interaction is functionally important. Post-translationally, phosphorylation at Tyr-251 and Tyr-281 activates it. May be phosphorylated by LCK. In terms of processing, N-glycosylated. Expressed on the majority of peripheral mononuclear cells, including natural killer (NK) cells, T-cells, B-cells, monocytes, and dendritic cells. Highly expressed in naive T-cells and B-cells but no expression on germinal center B-cells. Abnormally low expression in naive B-cells from HIV-1 infected patients. Very low expression in NK cells from a patient with chronic active Epstein-Barr virus infection.

It localises to the cell membrane. In terms of biological role, functions as an inhibitory receptor that plays a constitutive negative regulatory role on cytolytic function of natural killer (NK) cells, B-cells and T-cells. Activation by Tyr phosphorylation results in recruitment and activation of the phosphatases PTPN6 and PTPN11. It also reduces the increase of intracellular calcium evoked by B-cell receptor ligation. May also play its inhibitory role independently of SH2-containing phosphatases. Modulates cytokine production in CD4+ T-cells, down-regulating IL2 and IFNG production while inducing secretion of transforming growth factor beta. Also down-regulates IgG and IgE production in B-cells as well as IL8, IL10 and TNF secretion. Inhibits proliferation and induces apoptosis in myeloid leukemia cell lines as well as prevents nuclear translocation of NF-kappa-B p65 subunit/RELA and phosphorylation of I-kappa-B alpha/CHUK in these cells. Inhibits the differentiation of peripheral blood precursors towards dendritic cells. The polypeptide is Leukocyte-associated immunoglobulin-like receptor 1 (LAIR1) (Homo sapiens (Human)).